The following is a 213-amino-acid chain: G2/mitotic-specific cyclin-1 (213 aa).

The disordered stretch occupies residues 1–23; sequence MKFSEEKNVSNNPTNFEGGLDSR.

It belongs to the cyclin family. Cyclin AB subfamily. As to quaternary structure, interacts with the CDC2 protein kinase to form a serine/threonine kinase holoenzyme complex also known as maturation promoting factor (MPF). The cyclin subunit imparts substrate specificity to the complex. In terms of tissue distribution, only expressed in organs with dividing cells.

Functionally, essential for the control of the cell cycle at the G2/M (mitosis) transition. This chain is G2/mitotic-specific cyclin-1, found in Medicago sativa (Alfalfa).